The following is a 376-amino-acid chain: Mannosyl phosphorylinositol ceramide synthase CSH1 (376 aa).

The next 2 membrane-spanning stretches (helical) occupy residues 7–27 and 274–294; these read ILIIANIALLISIIHYTFDLL and ILSCVVTGFIFGFFILYGEFT. The segment at 331 to 351 is disordered; it reads NKEKRRNPTRHEYNSRGKRLR. A Phosphoserine modification is found at Ser354.

The protein belongs to the glycosyltransferase 32 family. Heterodimer of CSH1 and CSG2.

The protein resides in the vacuole membrane. The enzyme catalyses a 1D-myo-inositol-1-phospho-N-[(R)-2-hydroxy-very-long-chain fatty acyl]-(R)-4-hydroxysphingoid base + GDP-alpha-D-mannose = an alpha-D-mannosyl-(1&lt;-&gt;6)-1D-myo-inositol-1-phospho-N-[(R)-2-hydroxy-very-long-chain fatty acyl]-(R)-4-hydroxysphingoid base + GDP + H(+). Involved in the synthesis of mannosyl phosphorylinositol ceramide. Catalyzes the addition of mannosyl to phosphorylinositol ceramide. The polypeptide is Mannosyl phosphorylinositol ceramide synthase CSH1 (Saccharomyces cerevisiae (strain ATCC 204508 / S288c) (Baker's yeast)).